The primary structure comprises 219 residues: Flagellin B4 (219 aa).

Positions 1 to 5 are excised as a propeptide; the sequence is MHRKG.

The protein belongs to the archaeal flagellin family.

The protein resides in the archaeal flagellum. Its function is as follows. Flagellin is the subunit protein which polymerizes to form the filaments of archaeal flagella. The polypeptide is Flagellin B4 (flaB4) (Pyrococcus abyssi (strain GE5 / Orsay)).